A 396-amino-acid polypeptide reads, in one-letter code: MAKGKFERTKPHVNVGTIGHVDHGKTTLTAAITTILSKKFGGEAKAYDQIDAAPEEKARGITINTAHVEYETANRHYAHVDCPGHADYVKNMITGAAQMDGAILVCSAADGPMPQTREHILLARQVGVPYIIVFLNKCDMVDDEELLELVEMEVRELLSKYDFPGDDVPIIKGSALKALEGDQSDIGEPAIFRLAEALDSYIPTPERAIDRPFLLPIEDVFSISGRGTVVTGRVERGIVKVGEEVEIVGIKATVKTTCTGVEMFRKLLDQGQAGDNVGVLLRGTKREDVERGQVLCKPGSIKPHTHFTGEVYVLSKEEGGRHTPFFNNYRPQFYFRTTDVTGSIELPEGTEMVMPGDNVSITVKLMAPIAMEEGLRFAIREGGRTVGAGVVAKIIE.

A tr-type G domain is found at 10-206 (KPHVNVGTIG…ALDSYIPTPE (197 aa)). The interval 19-26 (GHVDHGKT) is G1. Residue 19–26 (GHVDHGKT) participates in GTP binding. A Mg(2+)-binding site is contributed by threonine 26. Residues 60–64 (GITIN) form a G2 region. A G3 region spans residues 81–84 (DCPG). GTP is bound by residues 81–85 (DCPGH) and 136–139 (NKCD). Residues 136 to 139 (NKCD) are G4. A G5 region spans residues 174–176 (SAL).

It belongs to the TRAFAC class translation factor GTPase superfamily. Classic translation factor GTPase family. EF-Tu/EF-1A subfamily. In terms of assembly, monomer.

The protein localises to the cytoplasm. It catalyses the reaction GTP + H2O = GDP + phosphate + H(+). Its function is as follows. GTP hydrolase that promotes the GTP-dependent binding of aminoacyl-tRNA to the A-site of ribosomes during protein biosynthesis. This is Elongation factor Tu from Aromatoleum aromaticum (strain DSM 19018 / LMG 30748 / EbN1) (Azoarcus sp. (strain EbN1)).